Reading from the N-terminus, the 1102-residue chain is Phosphatidylinositol 4,5-bisphosphate 3-kinase catalytic subunit gamma isoform (1102 aa).

A PI3K-ABD domain is found at 34 to 141 (SMELIPIEFV…PGQIHVVQRH (108 aa)). Residues 217-309 (NNCVFIVIHR…GEEIHLVLDT (93 aa)) enclose the PI3K-RBD domain. One can recognise a C2 PI3K-type domain in the interval 357-521 (CDRKFRVKIR…NSMSISILLD (165 aa)). The 183-residue stretch at 541-723 (DRVRAEMPNQ…AVILEAYLRG (183 aa)) folds into the PIK helical domain. The PI3K/PI4K catalytic domain occupies 797–1080 (VIEKCKVMAS…QIEVCRDKGW (284 aa)). A G-loop region spans residues 803-809 (VMASKKK). ATP contacts are provided by residues 829 to 838 (GIIFKHGDDL) and 864 to 872 (LLPYGCIST). The segment at 943 to 951 (GIGDRHNDN) is catalytic loop. An ATP-binding site is contributed by 961-969 (FHIDFGHIL). Residues 962 to 988 (HIDFGHILGNYKSFLGINKERVPFVLT) are activation loop. At Thr-1024 the chain carries Phosphothreonine; by PKA. Ser-1101 carries the post-translational modification Phosphoserine; by autocatalysis.

The protein belongs to the PI3/PI4-kinase family. In terms of assembly, heterodimer of a catalytic subunit PIK3CG and a PIK3R5 or PIK3R6 regulatory subunit. Interacts with GRK2 through the PIK helical domain. Interaction with GRK2 is required for targeting to agonist-occupied receptor. Interacts with PDE3B; regulates PDE3B activity and thereby cAMP levels in cells. Interacts with TPM2. Interacts with EPHA8; regulates integrin-mediated cell adhesion to substrate. Interacts with HRAS; the interaction is required for membrane recruitment and beta-gamma G protein dimer-dependent activation of the PI3K gamma complex PIK3CG:PIK3R6. Post-translationally, autophosphorylation at Ser-1101 has no effect on the phosphatidylinositol-4,5-bisphosphate 3-kinase activity.

The protein resides in the cytoplasm. The protein localises to the cell membrane. The catalysed reaction is a 1,2-diacyl-sn-glycero-3-phospho-(1D-myo-inositol-4,5-bisphosphate) + ATP = a 1,2-diacyl-sn-glycero-3-phospho-(1D-myo-inositol-3,4,5-trisphosphate) + ADP + H(+). It carries out the reaction a 1,2-diacyl-sn-glycero-3-phospho-(1D-myo-inositol) + ATP = a 1,2-diacyl-sn-glycero-3-phospho-(1D-myo-inositol-3-phosphate) + ADP + H(+). The enzyme catalyses a 1,2-diacyl-sn-glycero-3-phospho-(1D-myo-inositol 4-phosphate) + ATP = a 1,2-diacyl-sn-glycero-3-phospho-(1D-myo-inositol-3,4-bisphosphate) + ADP + H(+). It catalyses the reaction L-seryl-[protein] + ATP = O-phospho-L-seryl-[protein] + ADP + H(+). It functions in the pathway phospholipid metabolism; phosphatidylinositol phosphate biosynthesis. With respect to regulation, activated by both the alpha and the beta-gamma G proteins following stimulation of G protein-coupled receptors (GPCRs). Activation by GPCRs is assisted by the regulatory subunits (PIK3R5 or PIK3R6) leading to the translocation from the cytosol to the plasma membrane and to kinase activation. When bound to PIK3R5 the PI3K activity of PIK3CG could be activated greater than 100-fold by the beta-gamma G proteins. Phosphoinositide-3-kinase (PI3K) that phosphorylates PtdIns(4,5)P2 (Phosphatidylinositol 4,5-bisphosphate) to generate phosphatidylinositol 3,4,5-trisphosphate (PIP3). PIP3 plays a key role by recruiting PH domain-containing proteins to the membrane, including AKT1 and PDPK1, activating signaling cascades involved in cell growth, survival, proliferation, motility and morphology. Links G-protein coupled receptor activation to PIP3 production. Involved in immune, inflammatory and allergic responses. Modulates leukocyte chemotaxis to inflammatory sites and in response to chemoattractant agents. May control leukocyte polarization and migration by regulating the spatial accumulation of PIP3 and by regulating the organization of F-actin formation and integrin-based adhesion at the leading edge. Controls motility of dendritic cells. Participates in T-lymphocyte migration. Regulates T-lymphocyte proliferation and cytokine production. Required for B-lymphocyte development and signaling. Together with other PI3Ks are involved in the oxidative burst produced by neutrophils in response to chemotactic agents. Together with PIK3CD regulate neutrophil extravasation. Together with PIK3CB promotes platelet aggregation and thrombosis. Regulates alpha-IIb/beta-3 integrins (ITGA2B/ ITGB3) adhesive function in platelets downstream of P2Y12 through a lipid kinase activity-independent mechanism. May have also a lipid kinase activity-dependent function in platelet aggregation. Involved in endothelial progenitor cell migration. Negative regulator of cardiac contractility. Modulates cardiac contractility by anchoring protein kinase A (PKA) and PDE3B activation, reducing cAMP levels. Regulates cardiac contractility also by promoting beta-adrenergic receptor internalization by binding to GRK2 and by non-muscle tropomyosin phosphorylation. Also has serine/threonine protein kinase activity: both lipid and protein kinase activities are required for beta-adrenergic receptor endocytosis. May also have a scaffolding role in modulating cardiac contractility. Contribute to cardiac hypertrophy under pathological stress. Through simultaneous binding of PDE3B to RAPGEF3 and PIK3R6 is assembled in a signaling complex in which the PI3K gamma complex is activated by RAPGEF3 and which is involved in angiogenesis. In neutrophils, participates in a phospholipase C-activating N-formyl peptide-activated GPCR (G protein-coupled receptor) signaling pathway downstream of RASGRP4-mediated Ras-activation, to promote neutrophil functional responses. This is Phosphatidylinositol 4,5-bisphosphate 3-kinase catalytic subunit gamma isoform (PIK3CG) from Sus scrofa (Pig).